Here is a 443-residue protein sequence, read N- to C-terminus: SURP and G-patch domain-containing protein 1-like protein (443 aa).

Disordered regions lie at residues 45 to 71 (IISNPKPAANKISIGLKPNDAQKKGGK) and 83 to 141 (LAPP…TVKK). An SURP motif repeat occupies 142 to 185 (VADKLASFVAKHGRPFEHITRQKNPGDTPFKFLFDENCADYKYY). 3 disordered regions span residues 198–221 (QTKDSGVLHSGDAGSRTSTAAIPL), 241–272 (TPVEPGASSRSAQASITRPSDSDSFSGPRGAD), and 285–325 (AQEE…HHMG). The span at 248-265 (SSRSAQASITRPSDSDSF) shows a compositional bias: polar residues. Basic and acidic residues predominate over residues 285 to 300 (AQEEKMRRPRQSKDEM). The span at 307–316 (QGPSETSSTD) shows a compositional bias: polar residues. The region spanning 360 to 407 (ADNVGHKLLSKMGWKEGEGIGSSRKGMADPIMAGDVKTNNLGVGASAP) is the G-patch domain.

Its subcellular location is the nucleus. The protein is SURP and G-patch domain-containing protein 1-like protein of Arabidopsis thaliana (Mouse-ear cress).